Here is a 302-residue protein sequence, read N- to C-terminus: MNQHGRSAEPGVASEGIAPYGDAHRGIAAKRKKTTTARISQMRVDGEKIAVLTAYDATFAAAADAAGVDCIMVGDSLGMVCQGRTTTVGVSLEDMLYHTRCVSQGIARADGSALIIADLPFGSYQQSNEQAIASAVQLMQAGAHMVKLEGGDWWTVDIVEFLVQRGIPVCAHLRLTPQTVSALGGYRVQGRSEEAAEKLRVDAGALDNAGASMMVLEMIPTELATSITSEMKSCATIGIGAGSGTAGQVLVMHDMLGINLGRMAKFVRNFMRDAEDVPTAFAAYVAAVKDGSFPDDKLHGFL.

The Mg(2+) site is built by D75 and D118. Residues 75–76 (DS), D118, and K147 contribute to the 3-methyl-2-oxobutanoate site. E149 lines the Mg(2+) pocket. E217 (proton acceptor) is an active-site residue.

This sequence belongs to the PanB family. As to quaternary structure, homodecamer; pentamer of dimers. The cofactor is Mg(2+).

The protein resides in the cytoplasm. The catalysed reaction is 3-methyl-2-oxobutanoate + (6R)-5,10-methylene-5,6,7,8-tetrahydrofolate + H2O = 2-dehydropantoate + (6S)-5,6,7,8-tetrahydrofolate. The protein operates within cofactor biosynthesis; (R)-pantothenate biosynthesis; (R)-pantoate from 3-methyl-2-oxobutanoate: step 1/2. Functionally, catalyzes the reversible reaction in which hydroxymethyl group from 5,10-methylenetetrahydrofolate is transferred onto alpha-ketoisovalerate to form ketopantoate. The sequence is that of 3-methyl-2-oxobutanoate hydroxymethyltransferase 1 from Zymomonas mobilis subsp. mobilis (strain ATCC 31821 / ZM4 / CP4).